A 251-amino-acid chain; its full sequence is Ubiquinone/menaquinone biosynthesis C-methyltransferase UbiE (251 aa).

S-adenosyl-L-methionine contacts are provided by residues T74, D95, and 123-124 (NA).

This sequence belongs to the class I-like SAM-binding methyltransferase superfamily. MenG/UbiE family.

It carries out the reaction a 2-demethylmenaquinol + S-adenosyl-L-methionine = a menaquinol + S-adenosyl-L-homocysteine + H(+). The enzyme catalyses a 2-methoxy-6-(all-trans-polyprenyl)benzene-1,4-diol + S-adenosyl-L-methionine = a 5-methoxy-2-methyl-3-(all-trans-polyprenyl)benzene-1,4-diol + S-adenosyl-L-homocysteine + H(+). The protein operates within quinol/quinone metabolism; menaquinone biosynthesis; menaquinol from 1,4-dihydroxy-2-naphthoate: step 2/2. It participates in cofactor biosynthesis; ubiquinone biosynthesis. In terms of biological role, methyltransferase required for the conversion of demethylmenaquinol (DMKH2) to menaquinol (MKH2) and the conversion of 2-polyprenyl-6-methoxy-1,4-benzoquinol (DDMQH2) to 2-polyprenyl-3-methyl-6-methoxy-1,4-benzoquinol (DMQH2). In Shewanella pealeana (strain ATCC 700345 / ANG-SQ1), this protein is Ubiquinone/menaquinone biosynthesis C-methyltransferase UbiE.